The sequence spans 258 residues: Indole-3-glycerol phosphate synthase (258 aa).

Belongs to the TrpC family.

The catalysed reaction is 1-(2-carboxyphenylamino)-1-deoxy-D-ribulose 5-phosphate + H(+) = (1S,2R)-1-C-(indol-3-yl)glycerol 3-phosphate + CO2 + H2O. It functions in the pathway amino-acid biosynthesis; L-tryptophan biosynthesis; L-tryptophan from chorismate: step 4/5. The sequence is that of Indole-3-glycerol phosphate synthase from Legionella pneumophila (strain Lens).